Reading from the N-terminus, the 847-residue chain is Alpha-glucuronidase (847 aa).

An N-terminal signal peptide occupies residues 1–19 (MVIRSLLLLLLAAIVPVFA). N52, N238, N321, N353, N586, N692, N740, and N767 each carry an N-linked (GlcNAc...) asparagine glycan.

This sequence belongs to the glycosyl hydrolase 67 family.

The protein localises to the secreted. It catalyses the reaction an alpha-D-glucuronoside + H2O = D-glucuronate + an alcohol. Functionally, releases 4-O-methylglucuronic acid from xylan. The polypeptide is Alpha-glucuronidase (Hypocrea jecorina (Trichoderma reesei)).